The following is a 158-amino-acid chain: 6,7-dimethyl-8-ribityllumazine synthase (158 aa).

Residues phenylalanine 23, 61-63, and 85-87 each bind 5-amino-6-(D-ribitylamino)uracil; these read SFE and AVI. 90–91 is a binding site for (2S)-2-hydroxy-3-oxobutyl phosphate; the sequence is ET. The Proton donor role is filled by histidine 93. Residue phenylalanine 118 participates in 5-amino-6-(D-ribitylamino)uracil binding. Arginine 132 is a binding site for (2S)-2-hydroxy-3-oxobutyl phosphate.

The protein belongs to the DMRL synthase family.

It catalyses the reaction (2S)-2-hydroxy-3-oxobutyl phosphate + 5-amino-6-(D-ribitylamino)uracil = 6,7-dimethyl-8-(1-D-ribityl)lumazine + phosphate + 2 H2O + H(+). It functions in the pathway cofactor biosynthesis; riboflavin biosynthesis; riboflavin from 2-hydroxy-3-oxobutyl phosphate and 5-amino-6-(D-ribitylamino)uracil: step 1/2. Functionally, catalyzes the formation of 6,7-dimethyl-8-ribityllumazine by condensation of 5-amino-6-(D-ribitylamino)uracil with 3,4-dihydroxy-2-butanone 4-phosphate. This is the penultimate step in the biosynthesis of riboflavin. The sequence is that of 6,7-dimethyl-8-ribityllumazine synthase from Prochlorococcus marinus (strain MIT 9215).